The following is a 384-amino-acid chain: Chorismate synthase (384 aa).

Residues R40 and R46 each coordinate NADP(+). Residues 128 to 130, G292, 307 to 311, and R333 contribute to the FMN site; these read RAS and KPIPT.

This sequence belongs to the chorismate synthase family. Homotetramer. FMNH2 is required as a cofactor.

It catalyses the reaction 5-O-(1-carboxyvinyl)-3-phosphoshikimate = chorismate + phosphate. It functions in the pathway metabolic intermediate biosynthesis; chorismate biosynthesis; chorismate from D-erythrose 4-phosphate and phosphoenolpyruvate: step 7/7. Catalyzes the anti-1,4-elimination of the C-3 phosphate and the C-6 proR hydrogen from 5-enolpyruvylshikimate-3-phosphate (EPSP) to yield chorismate, which is the branch point compound that serves as the starting substrate for the three terminal pathways of aromatic amino acid biosynthesis. This reaction introduces a second double bond into the aromatic ring system. The sequence is that of Chorismate synthase from Carboxydothermus hydrogenoformans (strain ATCC BAA-161 / DSM 6008 / Z-2901).